The sequence spans 666 residues: Semaphorin-7A (666 aa).

The interval Met1–Pro21 is disordered. An N-terminal signal peptide occupies residues Met1–Ala44. Residues Ala9 to Pro21 show a composition bias toward low complexity. The region spanning Arg53 to Leu490 is the Sema domain. The N-linked (GlcNAc...) asparagine glycan is linked to Asn105. Cysteines 120 and 126 form a disulfide. At Arg135 the chain carries Asymmetric dimethylarginine. Cys143 and Cys152 form a disulfide bridge. 2 N-linked (GlcNAc...) asparagine glycosylation sites follow: Asn157 and Asn258. Disulfide bonds link Cys266–Cys366, Cys291–Cys335, Cys493–Cys511, Cys500–Cys541, Cys503–Cys518, Cys566–Cys613, and Cys587–Cys596. An interaction with integrins region spans residues Arg267–Asp269. A Cell attachment site motif is present at residues Arg267–Asp269. Residue Asn330 is glycosylated (N-linked (GlcNAc...) asparagine). Positions Pro544–Leu629 constitute an Ig-like C2-type domain. An N-linked (GlcNAc...) asparagine glycan is attached at Asn602. Ala648 is lipidated: GPI-anchor amidated alanine. A propeptide spans Ala649 to His666 (removed in mature form).

The protein belongs to the semaphorin family. As to quaternary structure, interacts with ITGA1 and ITGB1. Interacts with PLXNC1. Detected in skin keratinocytes and on endothelial cells from skin blood vessels (at protein level). Expressed in fibroblasts, keratinocytes, melanocytes, placenta, testis, ovary, spleen, brain, spinal cord, lung, heart, adrenal gland, lymph nodes, thymus, intestine and kidney.

It is found in the cell membrane. Plays an important role in integrin-mediated signaling and functions both in regulating cell migration and immune responses. Promotes formation of focal adhesion complexes, activation of the protein kinase PTK2/FAK1 and subsequent phosphorylation of MAPK1 and MAPK3. Promotes production of pro-inflammatory cytokines by monocytes and macrophages. Plays an important role in modulating inflammation and T-cell-mediated immune responses. Promotes axon growth in the embryonic olfactory bulb. Promotes attachment, spreading and dendrite outgrowth in melanocytes. This chain is Semaphorin-7A (SEMA7A), found in Homo sapiens (Human).